The sequence spans 199 residues: N-(5'-phosphoribosyl)anthranilate isomerase (199 aa).

It belongs to the TrpF family.

It catalyses the reaction N-(5-phospho-beta-D-ribosyl)anthranilate = 1-(2-carboxyphenylamino)-1-deoxy-D-ribulose 5-phosphate. Its pathway is amino-acid biosynthesis; L-tryptophan biosynthesis; L-tryptophan from chorismate: step 3/5. The sequence is that of N-(5'-phosphoribosyl)anthranilate isomerase from Streptococcus pneumoniae serotype 19F (strain G54).